We begin with the raw amino-acid sequence, 271 residues long: Uridine-cytidine kinase 1-A (271 aa).

Gly-24 to Thr-32 is an ATP binding site. Substrate is bound by residues Asp-81, Tyr-109, His-114, Arg-163, Arg-172, and Gln-180. Asp-209 serves as a coordination point for ATP. The segment at Ser-241 to His-271 is disordered. Positions Thr-262–His-271 are enriched in basic and acidic residues.

Belongs to the uridine kinase family.

It catalyses the reaction uridine + ATP = UMP + ADP + H(+). The catalysed reaction is cytidine + ATP = CMP + ADP + H(+). It participates in pyrimidine metabolism; CTP biosynthesis via salvage pathway; CTP from cytidine: step 1/3. Its pathway is pyrimidine metabolism; UMP biosynthesis via salvage pathway; UMP from uridine: step 1/1. Its function is as follows. Phosphorylates uridine and cytidine to uridine monophosphate and cytidine monophosphate. Does not phosphorylate deoxyribonucleosides or purine ribonucleosides. Can use ATP or GTP as a phosphate donor. This Xenopus laevis (African clawed frog) protein is Uridine-cytidine kinase 1-A (uck1-a).